Reading from the N-terminus, the 650-residue chain is Vitrin (650 aa).

The signal sequence occupies residues 1 to 26 (MGIVVPTMKASVIEVLLVLLVTGIHS). The 94-residue stretch at 40–133 (TVPQINCDVK…LSLPRWRESF (94 aa)) folds into the LCCL domain. Cystine bridges form between cysteine 46–cysteine 62 and cysteine 66–cysteine 86. Residues 198-226 (RSTSKPFAASVTNSPRPQPVGHRSQEMEE) form a disordered region. VWFA domains are found at residues 265–450 (DLSF…VKRV) and 467–640 (DIGF…IQNI). Asparagine 492 carries an N-linked (GlcNAc...) asparagine glycan.

As to quaternary structure, binds dermatan sulfate and chondroitin sulfate.

It localises to the secreted. It is found in the extracellular space. The protein localises to the extracellular matrix. Functionally, promotes matrix assembly and cell adhesiveness. Plays a role in spinal cord formation by regulating the proliferation and differentiation of neural stem cells. In Mus musculus (Mouse), this protein is Vitrin (Vit).